We begin with the raw amino-acid sequence, 106 residues long: Nucleoid-associated protein RPD_0086 (106 aa).

The protein belongs to the YbaB/EbfC family. Homodimer.

The protein resides in the cytoplasm. It is found in the nucleoid. Its function is as follows. Binds to DNA and alters its conformation. May be involved in regulation of gene expression, nucleoid organization and DNA protection. In Rhodopseudomonas palustris (strain BisB5), this protein is Nucleoid-associated protein RPD_0086.